The primary structure comprises 348 residues: Bifunctional nitrilase/nitrile hydratase NIT4B (348 aa).

Residues 29–300 form the CN hydrolase domain; sequence VRATVVQAST…EALISADLDL (272 aa). The Proton acceptor role is filled by Glu-69. Residue Lys-156 is the Proton donor of the active site. Cys-190 (nucleophile) is an active-site residue.

The protein belongs to the carbon-nitrogen hydrolase superfamily. Nitrilase family. As to expression, expressed in roots, stems, cotyledons, leaves and flowers.

The catalysed reaction is a nitrile + 2 H2O = a carboxylate + NH4(+). It carries out the reaction 3-cyano-L-alanine + 2 H2O = L-aspartate + NH4(+). In terms of biological role, highly specific for beta-cyano-L-alanine (Ala(CN)). Low activity with 3-phenylpropionitrile (PPN). Not associated with auxin production but may be involved in cyanide detoxification. The chain is Bifunctional nitrilase/nitrile hydratase NIT4B (NIT4B) from Nicotiana tabacum (Common tobacco).